The following is a 161-amino-acid chain: uncharacterized protein (161 aa).

Positions 1–23 form a signal peptide, or 21; it reads MKKFAFLTALFAACYLPNAYAHA. A helical membrane pass occupies residues 129 to 149; it reads IYLHDILGGIGYIVGIAGLIA.

It is found in the membrane. This is an uncharacterized protein from Haemophilus influenzae (strain ATCC 51907 / DSM 11121 / KW20 / Rd).